Consider the following 166-residue polypeptide: Putative methyltransferase Rv1506c (166 aa).

It belongs to the methyltransferase superfamily.

In terms of biological role, probably plays a role in host phagosome maturation arrest, as well as a role in the synthesis of acyltrehalose-containing glycolipids. The protein is Putative methyltransferase Rv1506c of Mycobacterium tuberculosis (strain ATCC 25618 / H37Rv).